We begin with the raw amino-acid sequence, 657 residues long: Threonine--tRNA ligase (657 aa).

The 70-residue stretch at 1–70 (MSDHKESTGA…NSDAAIEIIT (70 aa)) folds into the TGS domain. Residues 253 to 555 (DHRKLGAELE…LIEHTAGNFP (303 aa)) are catalytic. Residues C351, H402, and H532 each coordinate Zn(2+).

Belongs to the class-II aminoacyl-tRNA synthetase family. In terms of assembly, homodimer. Zn(2+) is required as a cofactor.

Its subcellular location is the cytoplasm. The enzyme catalyses tRNA(Thr) + L-threonine + ATP = L-threonyl-tRNA(Thr) + AMP + diphosphate + H(+). In terms of biological role, catalyzes the attachment of threonine to tRNA(Thr) in a two-step reaction: L-threonine is first activated by ATP to form Thr-AMP and then transferred to the acceptor end of tRNA(Thr). Also edits incorrectly charged L-seryl-tRNA(Thr). The chain is Threonine--tRNA ligase from Chlorobium chlorochromatii (strain CaD3).